Reading from the N-terminus, the 451-residue chain is Phosphoglucosamine mutase (451 aa).

Catalysis depends on Ser-102, which acts as the Phosphoserine intermediate. Mg(2+)-binding residues include Ser-102, Asp-243, Asp-245, and Asp-247. Ser-102 carries the phosphoserine modification.

Belongs to the phosphohexose mutase family. It depends on Mg(2+) as a cofactor. Activated by phosphorylation.

The catalysed reaction is alpha-D-glucosamine 1-phosphate = D-glucosamine 6-phosphate. Functionally, catalyzes the conversion of glucosamine-6-phosphate to glucosamine-1-phosphate. In Salinispora tropica (strain ATCC BAA-916 / DSM 44818 / JCM 13857 / NBRC 105044 / CNB-440), this protein is Phosphoglucosamine mutase.